Here is a 215-residue protein sequence, read N- to C-terminus: Large ribosomal subunit protein bL25 (215 aa).

Composition is skewed to polar residues over residues 1–19 and 206–215; these read MAKSTVNKLSVSVRTNTGK and ENKTAATESE. Disordered stretches follow at residues 1-29 and 190-215; these read MAKSTVNKLSVSVRTNTGKGASRRARRDG and AKYAGEAHEAPEVGTAENKTAATESE.

The protein belongs to the bacterial ribosomal protein bL25 family. CTC subfamily. As to quaternary structure, part of the 50S ribosomal subunit; part of the 5S rRNA/L5/L18/L25 subcomplex. Contacts the 5S rRNA. Binds to the 5S rRNA independently of L5 and L18.

In terms of biological role, this is one of the proteins that binds to the 5S RNA in the ribosome where it forms part of the central protuberance. This Mycobacterium leprae (strain TN) protein is Large ribosomal subunit protein bL25.